Here is a 4367-residue protein sequence, read N- to C-terminus: Dynein heavy chain, cytoplasmic (4367 aa).

Residues 1-13 (MMDSVPSPPPQPS) are compositionally biased toward pro residues. Residues 1–20 (MMDSVPSPPPQPSPDANGVA) are disordered. The interval 1 to 1904 (MMDSVPSPPP…HIKMANAKLN (1904 aa)) is stem. 5 coiled-coil regions span residues 676 to 693 (ARQIERQLDQYMKKVEQV), 1176 to 1215 (IKFASRLGNRMREVYAELEKARKDLEGQAMTANSTAEAVR), 1327 to 1351 (LTHFEQRITKLQEESAMVAKAKEAL), 1557 to 1574 (YKEFEEEASSWEEKLNRV), and 1637 to 1668 (NIPNVQKSLERLAELLNKIQKALGEYLEKERV). AAA regions lie at residues 1905 to 2130 (YGFE…VLVS), 2202 to 2460 (EAIR…FTVA), 2566 to 2815 (EVNT…WVRG), and 2909 to 3179 (TFCE…QGKI). 1943-1950 (GPAGTGKT) lines the ATP pocket. Positions 2195–2218 (ASLEKLQEAIRRLAAERQLVVNDI) form a coiled coil. Residues 2240-2247 (GNSGSGKS), 2605-2612 (GPPGSGKT), and 2947-2954 (GVSGSGKT) each bind ATP. Coiled-coil stretches lie at residues 3193–3296 (QYVK…LARA), 3423–3481 (PLRE…SRVQ), and 3778–3809 (VIETLETLKTEAAEISAKMSNTEGVMAEVEQI). The stalk stretch occupies residues 3193–3481 (QYVKLYNEKR…AIKAEMSRVQ (289 aa)). AAA regions lie at residues 3565–3794 (LSTA…EISA) and 4003–4215 (AERF…VIDT).

It belongs to the dynein heavy chain family. In terms of assembly, consists of at least two heavy chains and a number of intermediate and light chains.

The protein localises to the cytoplasm. The protein resides in the cytoskeleton. Its function is as follows. Cytoplasmic dynein acts as a motor for the intracellular retrograde motility of vesicles and organelles along microtubules. Dynein has ATPase activity; the force-producing power stroke is thought to occur on release of ADP. Required to maintain uniform nuclear distribution in hyphae. This Neurospora crassa (strain ATCC 24698 / 74-OR23-1A / CBS 708.71 / DSM 1257 / FGSC 987) protein is Dynein heavy chain, cytoplasmic (ro-1).